The following is a 306-amino-acid chain: Beta-lactamase (306 aa).

The first 36 residues, 1–36 (MKLKTKASIKFGICVGLLCLSITGFTPFFNSTHAEA), serve as a signal peptide directing secretion. Ser-89 functions as the Acyl-ester intermediate in the catalytic mechanism. 251-253 (KSG) lines the substrate pocket.

It belongs to the class-A beta-lactamase family.

The protein resides in the secreted. It carries out the reaction a beta-lactam + H2O = a substituted beta-amino acid. In terms of biological role, this protein is a beta-lactamase with a substrate specificity for penicillins. The protein is Beta-lactamase (penP) of Bacillus subtilis (strain 168).